We begin with the raw amino-acid sequence, 228 residues long: Cytochrome b6-f complex iron-sulfur subunit 2, chloroplastic (228 aa).

A chloroplast-targeting transit peptide spans 1–49 (MASSTLSPVTQLCSSKSGLSSVSQCLLLKPMKINSHGLGKDKRMKVKCM). The helical transmembrane segment at 71–91 (LLLGALSLPTAGMLVPYATFF) threads the bilayer. The 97-residue stretch at 115-211 (ASEWLKTHPP…ADIDDGKVVF (97 aa)) folds into the Rieske domain. [2Fe-2S] cluster contacts are provided by C157, H159, C175, and H178. C162 and C177 are oxidised to a cystine.

It belongs to the Rieske iron-sulfur protein family. In terms of assembly, the 4 large subunits of the cytochrome b6-f complex are cytochrome b6, subunit IV (17 kDa polypeptide, petD), cytochrome f and the Rieske protein, while the 4 small subunits are petG, petL, petM and petN. The complex functions as a dimer. It depends on [2Fe-2S] cluster as a cofactor.

The protein localises to the plastid. It localises to the chloroplast thylakoid membrane. The catalysed reaction is 2 oxidized [plastocyanin] + a plastoquinol + 2 H(+)(in) = 2 reduced [plastocyanin] + a plastoquinone + 4 H(+)(out). Functionally, component of the cytochrome b6-f complex, which mediates electron transfer between photosystem II (PSII) and photosystem I (PSI), cyclic electron flow around PSI, and state transitions. In Nicotiana tabacum (Common tobacco), this protein is Cytochrome b6-f complex iron-sulfur subunit 2, chloroplastic (petC2).